We begin with the raw amino-acid sequence, 293 residues long: Glycine--tRNA ligase alpha subunit (293 aa).

This sequence belongs to the class-II aminoacyl-tRNA synthetase family. As to quaternary structure, tetramer of two alpha and two beta subunits.

The protein resides in the cytoplasm. The catalysed reaction is tRNA(Gly) + glycine + ATP = glycyl-tRNA(Gly) + AMP + diphosphate. This chain is Glycine--tRNA ligase alpha subunit, found in Prochlorococcus marinus (strain MIT 9211).